The primary structure comprises 450 residues: Tubulin alpha-3E chain (450 aa).

The short motif at 1-4 is the MREC motif element; that stretch reads MREC. A GTP-binding site is contributed by Gln11. Position 40 is an N6-acetyllysine (Lys40). GTP contacts are provided by Glu71, Ser140, Gly144, Thr145, Thr179, Asn206, and Asn228. Glu71 contributes to the Mg(2+) binding site. Residue Glu254 is part of the active site. At Tyr282 the chain carries 3'-nitrotyrosine. Ser439 carries the post-translational modification Phosphoserine. At Tyr450 the chain carries 3'-nitrotyrosine.

This sequence belongs to the tubulin family. In terms of assembly, dimer of alpha and beta chains. A typical microtubule is a hollow water-filled tube with an outer diameter of 25 nm and an inner diameter of 15 nM. Alpha-beta heterodimers associate head-to-tail to form protofilaments running lengthwise along the microtubule wall with the beta-tubulin subunit facing the microtubule plus end conferring a structural polarity. Microtubules usually have 13 protofilaments but different protofilament numbers can be found in some organisms and specialized cells. Mg(2+) is required as a cofactor. In terms of processing, some glutamate residues at the C-terminus are polyglutamylated, resulting in polyglutamate chains on the gamma-carboxyl group. Polyglutamylation plays a key role in microtubule severing by spastin (SPAST). SPAST preferentially recognizes and acts on microtubules decorated with short polyglutamate tails: severing activity by SPAST increases as the number of glutamates per tubulin rises from one to eight, but decreases beyond this glutamylation threshold. Glutamylation is also involved in cilia motility. Post-translationally, some glutamate residues at the C-terminus are monoglycylated but not polyglycylated due to the absence of functional TTLL10 in human. Monoglycylation is mainly limited to tubulin incorporated into cilia and flagella axonemes, which is required for their stability and maintenance. Flagella glycylation controls sperm motility. Both polyglutamylation and monoglycylation can coexist on the same protein on adjacent residues, and lowering glycylation levels increases polyglutamylation, and reciprocally. Acetylation of alpha chains at Lys-40 is located inside the microtubule lumen. This modification has been correlated with increased microtubule stability, intracellular transport and ciliary assembly. In terms of processing, methylation of alpha chains at Lys-40 is found in mitotic microtubules and is required for normal mitosis and cytokinesis contributing to genomic stability. Post-translationally, nitration of Tyr-450 is irreversible and interferes with normal dynein intracellular distribution. Undergoes a tyrosination/detyrosination cycle, the cyclic removal and re-addition of a C-terminal tyrosine residue by the enzymes tubulin tyrosine carboxypeptidase (MATCAP1/KIAA0895L, VASH1 or VASH2) and tubulin tyrosine ligase (TTL), respectively. In terms of processing, tyrosination promotes microtubule interaction with CAP-Gly domain-containing proteins such as CLIP1, CLIP2 and DCTN1. Tyrosination regulates the initiation of dynein-dynactin motility via interaction with DCTN1, which brings the dynein-dynactin complex into contact with microtubules. In neurons, tyrosinated tubulins mediate the initiation of retrograde vesicle transport. Post-translationally, detyrosination is involved in metaphase plate congression by guiding chromosomes during mitosis: detyrosination promotes interaction with CENPE, promoting pole-proximal transport of chromosomes toward the equator. Detyrosination increases microtubules-dependent mechanotransduction in dystrophic cardiac and skeletal muscle. In cardiomyocytes, detyrosinated microtubules are required to resist to contractile compression during contraction: detyrosination promotes association with desmin (DES) at force-generating sarcomeres, leading to buckled microtubules and mechanical resistance to contraction.

It localises to the cytoplasm. It is found in the cytoskeleton. The catalysed reaction is GTP + H2O = GDP + phosphate + H(+). In terms of biological role, tubulin is the major constituent of microtubules, a cylinder consisting of laterally associated linear protofilaments composed of alpha- and beta-tubulin heterodimers. Microtubules grow by the addition of GTP-tubulin dimers to the microtubule end, where a stabilizing cap forms. Below the cap, tubulin dimers are in GDP-bound state, owing to GTPase activity of alpha-tubulin. The chain is Tubulin alpha-3E chain (TUBA3E) from Homo sapiens (Human).